A 56-amino-acid chain; its full sequence is MLTWALIFLVVAVVAALFGFGGIAGAAASIAQILFFVFLVLLVISLIMHFTRRSRL.

Helical transmembrane passes span W4–A24 and I30–F50.

The protein belongs to the UPF0391 family.

Its subcellular location is the cell membrane. In Rhodospirillum rubrum (strain ATCC 11170 / ATH 1.1.1 / DSM 467 / LMG 4362 / NCIMB 8255 / S1), this protein is UPF0391 membrane protein Rru_A0119.